The primary structure comprises 296 residues: Peroxidase P7 (296 aa).

Gln-1 bears the Pyrrolidone carboxylic acid mark. 4 cysteine pairs are disulfide-bonded: Cys-11–Cys-91, Cys-44–Cys-49, Cys-97–Cys-292, and Cys-176–Cys-201. His-42 functions as the Proton acceptor in the catalytic mechanism. Ca(2+) contacts are provided by Asp-43, Val-46, Gly-48, Asp-50, and Ser-52. Pro-139 is a substrate binding site. His-169 is a binding site for heme b. Thr-170 contacts Ca(2+). N-linked (GlcNAc...) asparagine glycosylation occurs at Asn-185. Residues Asp-216, Ser-219, and Asp-224 each contribute to the Ca(2+) site.

The protein belongs to the peroxidase family. Classical plant (class III) peroxidase subfamily. It depends on Ca(2+) as a cofactor. Heme b serves as cofactor.

It catalyses the reaction 2 a phenolic donor + H2O2 = 2 a phenolic radical donor + 2 H2O. Its function is as follows. Removal of H(2)O(2), oxidation of toxic reductants, biosynthesis and degradation of lignin, suberization, auxin catabolism, response to environmental stresses such as wounding, pathogen attack and oxidative stress. These functions might be dependent on each isozyme/isoform in each plant tissue. The chain is Peroxidase P7 from Brassica rapa subsp. rapa (Turnip).